We begin with the raw amino-acid sequence, 452 residues long: Phosphoglucosamine mutase (452 aa).

The active-site Phosphoserine intermediate is the S108. Residues S108, D247, D249, and D251 each contribute to the Mg(2+) site. At S108 the chain carries Phosphoserine.

The protein belongs to the phosphohexose mutase family. It depends on Mg(2+) as a cofactor. In terms of processing, activated by phosphorylation.

The enzyme catalyses alpha-D-glucosamine 1-phosphate = D-glucosamine 6-phosphate. In terms of biological role, catalyzes the conversion of glucosamine-6-phosphate to glucosamine-1-phosphate. The polypeptide is Phosphoglucosamine mutase (Burkholderia mallei (strain NCTC 10247)).